The primary structure comprises 216 residues: Holliday junction branch migration complex subunit RuvA (216 aa).

Residues 1 to 64 (MISFIKGVLI…EDAQQLYGFK (64 aa)) are domain I. The domain II stretch occupies residues 65–143 (SKVDKKVFQE…KMANEIYAQT (79 aa)). A flexible linker region spans residues 144-163 (SGTTTTSQDSQAQQAPTSAV). Residues 164–216 (LANSIFNESVDALLALGYKQKDAEKMSRSAMGDATTAAEVIRKALQGSIRSKR) are domain III.

This sequence belongs to the RuvA family. Homotetramer. Forms an RuvA(8)-RuvB(12)-Holliday junction (HJ) complex. HJ DNA is sandwiched between 2 RuvA tetramers; dsDNA enters through RuvA and exits via RuvB. An RuvB hexamer assembles on each DNA strand where it exits the tetramer. Each RuvB hexamer is contacted by two RuvA subunits (via domain III) on 2 adjacent RuvB subunits; this complex drives branch migration. In the full resolvosome a probable DNA-RuvA(4)-RuvB(12)-RuvC(2) complex forms which resolves the HJ.

Its subcellular location is the cytoplasm. The RuvA-RuvB-RuvC complex processes Holliday junction (HJ) DNA during genetic recombination and DNA repair, while the RuvA-RuvB complex plays an important role in the rescue of blocked DNA replication forks via replication fork reversal (RFR). RuvA specifically binds to HJ cruciform DNA, conferring on it an open structure. The RuvB hexamer acts as an ATP-dependent pump, pulling dsDNA into and through the RuvAB complex. HJ branch migration allows RuvC to scan DNA until it finds its consensus sequence, where it cleaves and resolves the cruciform DNA. The polypeptide is Holliday junction branch migration complex subunit RuvA (Francisella tularensis subsp. novicida (strain U112)).